Reading from the N-terminus, the 280-residue chain is Bifunctional protein FolD (280 aa).

NADP(+) is bound by residues 166–168 (GRS) and S191.

The protein belongs to the tetrahydrofolate dehydrogenase/cyclohydrolase family. In terms of assembly, homodimer.

It catalyses the reaction (6R)-5,10-methylene-5,6,7,8-tetrahydrofolate + NADP(+) = (6R)-5,10-methenyltetrahydrofolate + NADPH. The catalysed reaction is (6R)-5,10-methenyltetrahydrofolate + H2O = (6R)-10-formyltetrahydrofolate + H(+). It participates in one-carbon metabolism; tetrahydrofolate interconversion. Functionally, catalyzes the oxidation of 5,10-methylenetetrahydrofolate to 5,10-methenyltetrahydrofolate and then the hydrolysis of 5,10-methenyltetrahydrofolate to 10-formyltetrahydrofolate. The protein is Bifunctional protein FolD of Teredinibacter turnerae (strain ATCC 39867 / T7901).